Consider the following 143-residue polypeptide: NADH-quinone oxidoreductase subunit A (143 aa).

3 helical membrane-spanning segments follow: residues 8 to 28 (FGNV…GYLT), 63 to 83 (FYVV…LFPW), and 93 to 113 (FALI…VYAW).

It belongs to the complex I subunit 3 family. As to quaternary structure, NDH-1 is composed of 14 different subunits. Subunits NuoA, H, J, K, L, M, N constitute the membrane sector of the complex.

It localises to the cell inner membrane. The catalysed reaction is a quinone + NADH + 5 H(+)(in) = a quinol + NAD(+) + 4 H(+)(out). Its function is as follows. NDH-1 shuttles electrons from NADH, via FMN and iron-sulfur (Fe-S) centers, to quinones in the respiratory chain. The immediate electron acceptor for the enzyme in this species is believed to be a menaquinone. Couples the redox reaction to proton translocation (for every two electrons transferred, four hydrogen ions are translocated across the cytoplasmic membrane), and thus conserves the redox energy in a proton gradient. The chain is NADH-quinone oxidoreductase subunit A from Chlorobium luteolum (strain DSM 273 / BCRC 81028 / 2530) (Pelodictyon luteolum).